We begin with the raw amino-acid sequence, 1720 residues long: MKIIFFLCSFLFFIINTQCVTHESYQELVKKLEALEDAVLTGYSLFQKEKMVLNEEEITTKGASAQSGASAQSGASAQSGASAQSGASAQSGASAQSGTSGPSGPSGTSPSSRSNTLPRSNTSSGASPPADASDSDAKSYADLKHRVRNYLFTIKELKYPELFDLTNHMLTLCDNIHGFKYLIDGYEEINELLYKLNFYFDLLRAKLNDVCANDYCQIPFNLKIRANELDVLKKLVFGYRKPLDNIKDNVGKMEDYIKKNKTTIANINELIEGSKKTIDQNKNADNEEGKKKLYQAQYDLSIYNKQLEEAHNLISVLEKRIDTLKKNENIKKLLDKINEIKNPPPANSGNTPNTLLDKNKKIEEHEEKIKEIAKTIKFNIDSLFTDPLELEYYLREKNKKVDVTPKSQDPTKSVQIPKVPYPNGIVYPLPLTDIHNSLAADNDKNSYGDLMNPHTKEKINEKIITDNKERKIFINNIKKKIDLEEKNINHTKEQNKKLLEDYEKSKKDYEELLEKFYEMKFNNNFNKDVVDKIFSARYTYNVEKQRYNNKFSSSNNSVYNVQKLKKALSYLEDYSLRKGISEKDFNHYYTLKTGLEADIKKLTEEIKSSENKILEKNFKGLTHSANGSLEVSDIVKLQVQKVLLIKKIEDLRKIELFLKNAQLKDSIHVPNIYKPQNKPEPYYLIVLKKEVDKLKEFIPKVKDMLKKEQAVLSSITQPLVAASETTEDGGHSTHTLSQSGETEVTEETEETEETVGHTTTVTITLPPTQPSPPKEVKVVENSIEHKSNDNSQALTKTVYLKKLDEFLTKSYICHKYILVSNSSMDQKLLEVYNLTPEEENELKSCDPLDLLFNIQNNIPAMYSLYDSMNNDLQHLFFELYQKEMIYYLHKLKEENHIKKLLEEQKQITGTSSTSSPGNTTVNTAQSATHSNSQNQQSNASSTNTQNGVAVSSGPAVVEESHDPLTVLSISNDLKGIVSLLNLGNKTKVPNPLTISTTEMEKFYENILKNNDTYFNDDIKQFVKSNSKVITGLTETQKNALNDEIKKLKDTLQLSFDLYNKYKLKLDRLFNKKKELGQDKMQIKKLTLLKEQLESKLNSLNNPHNVLQNFSVFFNKKKEAEIAETENTLENTKILLKHYKGLVKYYNGESSPLKTLSEVSIQTEDNYANLEKFRVLSKIDGKLNDNLHLGKKKLSFLSSGLHHLITELKEVIKNKNYTGNSPSENNKKVNEALKSYENFLPEAKVTTVVTPPQPDVTPSPLSVRVSGSSGSTKEETQIPTSGSLLTELQQVVQLQNYDEEDDSLVVLPIFGESEDNDEYLDQVVTGEAISVTMDNILSGFENEYDVIYLKPLAGVYRSLKKQIEKNIFTFNLNLNDILNSRLKKRKYFLDVLESDLMQFKHISSNEYIIEDSFKLLNSEQKNTLLKSYKYIKESVENDIKFAQEGISYYEKVLAKYKDDLESIKKVIKEEKEKFPSSPPTTPPSPAKTDEQKKESKFLPFLTNIETLYNNLVNKIDDYLINLKAKINDCNVEKDEAHVKITKLSDLKAIDDKIDLFKNPYDFEAIKKLINDDTKKDMLGKLLSTGLVQNFPNTIISKLIEGKFQDMLNISQHQCVKKQCPENSGCFRHLDEREECKCLLNYKQEGDKCVENPNPTCNENNGGCDADATCTEEDSGSSRKKITCECTKPDSYPLFDGIFCSSSNFLGISFLLILMLILYSFI.

Residues 1 to 19 form the signal peptide; that stretch reads MKIIFFLCSFLFFIINTQC. A compositionally biased stretch (low complexity) spans 63-112; the sequence is ASAQSGASAQSGASAQSGASAQSGASAQSGASAQSGTSGPSGPSGTSPSS. The disordered stretch occupies residues 63–137; it reads ASAQSGASAQ…PPADASDSDA (75 aa). Residues 113–122 show a composition bias toward polar residues; that stretch reads RSNTLPRSNT. Residues 123 to 132 are compositionally biased toward low complexity; it reads SSGASPPADA. Positions 474–519 form a coiled coil; it reads INNIKKKIDLEEKNINHTKEQNKKLLEDYEKSKKDYEELLEKFYEM. Disordered stretches follow at residues 723-775, 908-955, 1249-1278, and 1470-1491; these read SETT…PPKE, TGTS…SGPA, TPPQ…TQIP, and KEKF…DEQK. Residues 743 to 753 show a composition bias toward acidic residues; sequence EVTEETEETEE. Residues 908–946 are compositionally biased toward low complexity; the sequence is TGTSSTSSPGNTTVNTAQSATHSNSQNQQSNASSTNTQN. Residues 1264 to 1278 are compositionally biased toward polar residues; that stretch reads VSGSSGSTKEETQIP. Residues 1475 to 1484 show a composition bias toward pro residues; it reads SSPPTTPPSP. EGF-like domains follow at residues 1611–1651 and 1652–1693; these read HQCV…VENP and NPTC…YPLF. 6 disulfide bridges follow: cysteine 1613/cysteine 1624, cysteine 1618/cysteine 1634, cysteine 1636/cysteine 1647, cysteine 1655/cysteine 1668, cysteine 1662/cysteine 1682, and cysteine 1684/cysteine 1698. A lipid anchor (GPI-anchor amidated serine) is attached at serine 1699. The propeptide at 1700-1720 is removed in mature form; it reads SSNFLGISFLLILMLILYSFI.

Forms a complex composed of subunits p83, p30, p38, and p42 which remain non-covalently associated; the complex is formed at the merozoite surface prior to egress from host erythrocytes. Forms a complex composed of processed MSP1 subunits, MSP6 subunit p36 and MSP7; the complex is formed at the merozoite surface prior to egress from host erythrocytes. Within the complex, interacts (via subunit p38) with MSP6 subunit p36 and (via subunits p83, p30 and p38) with MSP7 (via subunit p22). Forms a complex composed of MSP1, MSP6, DBLMSP1 and DBLMSP2. Within the complex, interacts (via subunit p38) with DBLMSP1 and DBLMSP2. Forms a complex composed of MSP1, and rhoptry proteins RhopH3, RAP1 and CLAG9/RhopH3. Within the complex, interacts (via subunits p42 and p19) with RhopH3 (via C-terminus). Forms a complex composed of MSP1, MSP6, MSP7, MSP9 and MSP3; within the complex, MSP6 and MSP9 mediate the binding to the host erythrocyte. Interacts (via subunits p19 and p42) with MSP9; the interaction is direct; MSP1 subunits p19 or p42, and MSP9 form a co-ligand complex that interacts with host SLC4A1/Band 3 protein. May interact with PFD6. Interacts with host spectrin. As to quaternary structure, interacts with host glycophorin GYPA in a sialic acid-independent manner. In terms of assembly, interacts with host proinflammatory cytokine S100P; the interaction blocks S100P inflammatory and chemotactic activities. Interacts with host SLC4A1/Band 3 (via 5ABC region) on the host erythrocyte surface in a sialic acid-independent manner. Post-translationally, the p190 precursor is cleaved by SUB1 prior to merozoite egress into 4 subunits p83, p30, p38, and p42 which remain non-covalently associated. SUB1-mediated proteolytic cleavage occurs in an orderly manner; the first cleavage occurs at the p30/p38 site, followed by cleavage at the p83/p30 site, in the 3D7 strain a second cleavage occurs at the N-terminus of p83, the last cleavage occurs at the p38/p42 site. The order of cleavage is essential for parasite viability. SUB1-mediated processing is essential for merozoite egress. In a second processing step during erythrocyte invasion, p42 is cleaved by SUB2 into p33 and p19; the latter remains attached to the merozoite surface via its GPI-anchor and is endocytosed during the subsequent ring stage.

The protein localises to the cell membrane. Its subcellular location is the secreted. It localises to the vacuole membrane. During the asexual blood stage, involved in merozoite egress from host erythrocytes possibly via its interaction with the host cytoskeleton protein spectrin resulting in the destabilization of the host cytoskeleton and thus leading to erythrocyte cell membrane rupture. Involved in the binding to host erythrocytes and is required for host erythrocyte invasion. In terms of biological role, by binding to host proinflammatory cytokine S100P may interfere with host immune responses. Functionally, involved in merozoite invasion of host erythrocytes. May play a role in the biogenesis and/or function of the food vacuole during the intraerythrocytic development. The polypeptide is Merozoite surface protein 1 (Plasmodium falciparum (isolate 3D7)).